Reading from the N-terminus, the 267-residue chain is Tryptophan synthase alpha chain (267 aa).

Active-site proton acceptor residues include Glu-49 and Asp-60.

This sequence belongs to the TrpA family. As to quaternary structure, tetramer of two alpha and two beta chains.

It carries out the reaction (1S,2R)-1-C-(indol-3-yl)glycerol 3-phosphate + L-serine = D-glyceraldehyde 3-phosphate + L-tryptophan + H2O. The protein operates within amino-acid biosynthesis; L-tryptophan biosynthesis; L-tryptophan from chorismate: step 5/5. Its function is as follows. The alpha subunit is responsible for the aldol cleavage of indoleglycerol phosphate to indole and glyceraldehyde 3-phosphate. The chain is Tryptophan synthase alpha chain from Solibacter usitatus (strain Ellin6076).